We begin with the raw amino-acid sequence, 388 residues long: Muscleblind-like protein 1 (388 aa).

T6 carries the phosphothreonine modification. 4 consecutive C3H1-type zinc fingers follow at residues 13–41 (WLTL…HPSK), 47–73 (NGRV…HPPP), 179–207 (TDRL…HPAD), and 215–241 (DNTV…HPPA).

It belongs to the muscleblind family. As to quaternary structure, interacts with DDX1 and YBX1. Interacts with HNRNPH1; the interaction in RNA-independent. Interacts with RBPMS; the interaction allows cooperative assembly of RNA-bound stable cell-specific alternative splicing regulatory complexes. As to expression, highly expressed in cardiac, skeletal muscle and during myoblast differentiation. Weakly expressed in other tissues (at protein level). Expressed in heart, brain, placenta, lung, liver, skeletal muscle, kidney and pancreas.

It is found in the nucleus. The protein resides in the cytoplasm. Its subcellular location is the cytoplasmic granule. Its function is as follows. Mediates pre-mRNA alternative splicing regulation. Acts either as activator or repressor of splicing on specific pre-mRNA targets. Inhibits cardiac troponin-T (TNNT2) pre-mRNA exon inclusion but induces insulin receptor (IR) pre-mRNA exon inclusion in muscle. Antagonizes the alternative splicing activity pattern of CELF proteins. Regulates the TNNT2 exon 5 skipping through competition with U2AF2. Inhibits the formation of the spliceosome A complex on intron 4 of TNNT2 pre-mRNA. Binds to the stem-loop structure within the polypyrimidine tract of TNNT2 intron 4 during spliceosome assembly. Binds to the 5'-YGCU(U/G)Y-3'consensus sequence. Binds to the IR RNA. Binds to expanded CUG repeat RNA, which folds into a hairpin structure containing GC base pairs and bulged, unpaired U residues. Together with RNA binding proteins RBPMS and RBFOX2, activates vascular smooth muscle cells alternative splicing events. Regulates NCOR2 alternative splicing. This chain is Muscleblind-like protein 1 (MBNL1), found in Homo sapiens (Human).